Consider the following 781-residue polypeptide: DNA replication helicase (781 aa).

64–71 (GTAGAGKS) provides a ligand contact to ATP.

The protein belongs to the herpesviridae helicase family. As to quaternary structure, associates with the primase and the primase-associated factor to form the helicase-primase complex.

It localises to the host nucleus. Functionally, this protein may be a helicase and is required for replication of viral DNA. Component of the helicase/primase complex. Unwinds the DNA at the replication forks and generates single-stranded DNA for both leading and lagging strand synthesis. The primase synthesizes short RNA primers on the lagging strand that the polymerase elongates using dNTPs. Possesses helicase-like motifs and therefore may act as the helicase subunit of the complex. This is DNA replication helicase from Saimiriine herpesvirus 2 (strain 11) (SaHV-2).